Here is a 384-residue protein sequence, read N- to C-terminus: MSVRTYRDISRRVSRKIRVGSVFVGGDAPVSVQTMTNTLTTDVAATVAQIRRAQEAGADIVRVSCPDEESTAALKAIISQVEVPIVADIHFHYKRAIEAAEAGAACLRINPGNIGSAERVREVVRAAKDHGCSMRIGVNAGSLEKELLEKYGEPCPEAMVESALSHARILEDNDFTEFKISVKASDAFLAVAAYKALAEACDYPLHLGITEAGGLRGGTVKSAIGIGSMLWAGIGDTIRVSLSAQPEEEVKVGFEILKSLNLRHRGVRVVSCPSCARQGFDVIKTVEVLESRLSHIQTPITLSIIGCVVNGPGEARETDIGLTGGGNLAKEGALNKVYVSGIPDHTINNEAMVDHLVALVEKKAAEIEALEAARKAKEPATAAE.

Cys-272, Cys-275, Cys-307, and Glu-314 together coordinate [4Fe-4S] cluster.

The protein belongs to the IspG family. [4Fe-4S] cluster serves as cofactor.

It catalyses the reaction (2E)-4-hydroxy-3-methylbut-2-enyl diphosphate + oxidized [flavodoxin] + H2O + 2 H(+) = 2-C-methyl-D-erythritol 2,4-cyclic diphosphate + reduced [flavodoxin]. It functions in the pathway isoprenoid biosynthesis; isopentenyl diphosphate biosynthesis via DXP pathway; isopentenyl diphosphate from 1-deoxy-D-xylulose 5-phosphate: step 5/6. Converts 2C-methyl-D-erythritol 2,4-cyclodiphosphate (ME-2,4cPP) into 1-hydroxy-2-methyl-2-(E)-butenyl 4-diphosphate. This is 4-hydroxy-3-methylbut-2-en-1-yl diphosphate synthase (flavodoxin) from Rhodospirillum rubrum (strain ATCC 11170 / ATH 1.1.1 / DSM 467 / LMG 4362 / NCIMB 8255 / S1).